Consider the following 490-residue polypeptide: Betaine aldehyde dehydrogenase (490 aa).

Residues Thr26, Ile27, and Asp93 each contribute to the K(+) site. 150 to 152 (GAW) provides a ligand contact to NAD(+). Catalysis depends on Lys162, which acts as the Charge relay system. 176-179 (KPSE) provides a ligand contact to NAD(+). Residue Val180 participates in K(+) binding. Position 230–233 (230–233 (GVAS)) interacts with NAD(+). Residue Leu246 participates in K(+) binding. Glu252 functions as the Proton acceptor in the catalytic mechanism. NAD(+) is bound by residues Gly254, Cys286, and Glu387. Residue Cys286 is the Nucleophile of the active site. Position 286 is a cysteine sulfenic acid (-SOH) (Cys286). Residues Lys457 and Gly460 each contribute to the K(+) site. Glu464 (charge relay system) is an active-site residue.

It belongs to the aldehyde dehydrogenase family. In terms of assembly, dimer of dimers. K(+) is required as a cofactor.

It catalyses the reaction betaine aldehyde + NAD(+) + H2O = glycine betaine + NADH + 2 H(+). The protein operates within amine and polyamine biosynthesis; betaine biosynthesis via choline pathway; betaine from betaine aldehyde: step 1/1. Its function is as follows. Involved in the biosynthesis of the osmoprotectant glycine betaine. Catalyzes the irreversible oxidation of betaine aldehyde to the corresponding acid. This Escherichia coli (strain K12 / DH10B) protein is Betaine aldehyde dehydrogenase.